Consider the following 427-residue polypeptide: Protein king tubby 1 (427 aa).

The segment at 48–174 (SPSNPDQIIS…ASGHNDAEGD (127 aa)) is disordered. Residues 57–86 (SSSGSPTTVTATGTGTTTTTGSVTTTPTSP) are compositionally biased toward low complexity.

It belongs to the TUB family.

Its subcellular location is the cytoplasm. It is found in the nucleus. This chain is Protein king tubby 1 (king-tubby1), found in Culex quinquefasciatus (Southern house mosquito).